The primary structure comprises 1829 residues: Afadin (1829 aa).

The Ras-associating 1 domain occupies 39 to 133; it reads FHGVMRFYFQ…GRFVLKNEND (95 aa). The disordered stretch occupies residues 129 to 196; that stretch reads KNENDAIPAK…PSQGDDSENS (68 aa). Residues 146 to 186 adopt a coiled-coil conformation; it reads EKQEKEGVIQNFKRTLSKKEKKEKKKREKEALRQASDKEER. Basic residues predominate over residues 160 to 172; it reads TLSKKEKKEKKKR. Basic and acidic residues predominate over residues 173-189; it reads EKEALRQASDKEERPSQ. A phosphoserine mark is found at S216, S246, and S256. Residues 246 to 348 enclose the Ras-associating 2 domain; it reads SGGTLRIYAD…LVFQLKRRPP (103 aa). Positions 356–371 are enriched in basic and acidic residues; the sequence is KKHVEGKPLKGKDRAD. Residues 356–377 are disordered; it reads KKHVEGKPLKGKDRADGSGYGS. A phosphoserine mark is found at S391 and S424. In terms of domain architecture, FHA spans 441–507; sequence FGPGIQPHHC…KFVDPIQDHV (67 aa). Residues S512, S557, S562, S589, and S655 each carry the phosphoserine modification. Positions 539 to 595 are disordered; sequence DIHSGTALPASRSTTRLDSDRVSSASSTAERGMVKPMIRLDQEQDYRRRESRTQDAA. Basic and acidic residues predominate over residues 576–591; it reads IRLDQEQDYRRRESRT. Residues 668–915 enclose the Dilute domain; sequence NKMVSMMEGV…IENVVAVAEN (248 aa). The PDZ domain maps to 1014 to 1100; sequence VITVTLKKQN…VVTLEVAKQG (87 aa). Phosphoserine occurs at positions 1090, 1114, 1133, 1147, 1150, 1179, 1180, 1189, and 1206. The tract at residues 1114-1230 is disordered; it reads SPMMQRISDR…PRPEAYPIPT (117 aa). Residues 1120–1135 show a composition bias toward basic and acidic residues; it reads ISDRRGSGKPRPKSEG. Positions 1139-1150 are enriched in polar residues; that stretch reads YNNSAQNGSPES. The span at 1159 to 1179 shows a compositional bias: basic and acidic residues; that stretch reads SEPKKLPGDDRLMKNRADHRS. Polar residues predominate over residues 1195–1217; the sequence is PYTSGTAAKITSVSTGNLCTEEQ. Phosphothreonine is present on residues T1218 and T1239. Phosphoserine is present on residues S1245 and S1282. A compositionally biased stretch (basic and acidic residues) spans 1300 to 1309; that stretch reads ESGMDRKCDS. Disordered stretches follow at residues 1300 to 1533 and 1574 to 1724; these read ESGM…EKQQ and RLQE…KTQV. A compositionally biased stretch (low complexity) spans 1316 to 1325; it reads SSSVESSTSS. A compositionally biased stretch (polar residues) spans 1332 to 1344; that stretch reads SSKSVTPASTLTK. S1335 bears the Phosphoserine mark. T1337 carries the phosphothreonine modification. Pro residues predominate over residues 1371–1380; that stretch reads LPPPPPPPPA. Positions 1401–1412 are enriched in low complexity; sequence NQAAPQSAQVAA. The segment covering 1413–1447 has biased composition (basic and acidic residues); sequence AERKKREEHQRWYEKEKARLEEERERKRREQERKL. Positions 1417–1454 form a coiled coil; the sequence is KREEHQRWYEKEKARLEEERERKRREQERKLGQMRTQS. Residues 1450–1464 show a composition bias toward polar residues; the sequence is MRTQSLNPASFSPLA. Basic and acidic residues predominate over residues 1494–1510; that stretch reads TIERRDLQYITISKEEL. S1506 and S1517 each carry phosphoserine. The span at 1520–1533 shows a compositional bias: basic and acidic residues; sequence PWKRDAREKLEKQQ. Residues 1530 to 1564 adopt a coiled-coil conformation; sequence EKQQQMHIVDMLSKEIHELQNKGDRTAEESDRLRK. The segment covering 1583–1594 has biased composition (acidic residues); the sequence is EDDDEEEDDDVD. Residues 1600-1672 are a coiled coil; it reads QRLEAERRAR…SRLEAERRRQ (73 aa). Residues 1602-1682 are compositionally biased toward basic and acidic residues; the sequence is LEAERRARLQ…HEEAARRLLE (81 aa). Position 1701 is a phosphoserine (S1701). Residues 1715-1724 are compositionally biased toward polar residues; that stretch reads RNASYLKTQV. Residue S1726 is modified to Phosphoserine. Residues 1742 to 1829 are disordered; sequence DEEENYVPAG…TELENELNTK (88 aa). Positions 1753-1764 are enriched in polar residues; the sequence is NSYSGSAGTTAG. The segment covering 1768-1781 has biased composition (basic and acidic residues); it reads APRDTREKLSRSQD. Phosphoserine is present on residues S1779 and S1804. Residues 1809-1829 show a composition bias toward basic and acidic residues; that stretch reads VSDKVKASRKLTELENELNTK. K1812 carries the N6-acetyllysine modification.

In terms of assembly, homodimer. Interacts with F-actin, nectin and NECTIN3. Essential for the association of nectin and E-cadherin. Isoform 2/s-afadin does not interact with F-actin. Interacts with ZO-1 and occludin, but probably in an indirect manner. Interacts with RIT1, RIT2, NRXN1 and BCR. Interacts with ADAM10; the interaction locks ADAM10 at adherens junctions following ADAM10 recruitment to adherens junctions by TSPAN33. Isoform 1 is widely expressed, including in heart, brain, spleen, lung, liver, skeletal muscle, kidney and testis. Isoform 2 is mainly expressed in the brain.

The protein localises to the cell junction. Its subcellular location is the adherens junction. Belongs to an adhesion system, probably together with the E-cadherin-catenin system, which plays a role in the organization of homotypic, interneuronal and heterotypic cell-cell adherens junctions (AJs). Nectin- and actin-filament-binding protein that connects nectin to the actin cytoskeleton. May play a key role in the organization of epithelial structures of the embryonic ectoderm. Essential for the organization of adherens junctions. The polypeptide is Afadin (Rattus norvegicus (Rat)).